A 173-amino-acid polypeptide reads, in one-letter code: Histone deacetylase complex subunit SAP30 homolog (173 aa).

The segment at 21-69 (CCLLDDGDRCRNQAGNASYSKRIQKTVTQRRLKLSIDTAARHIYICDFH) adopts an Atypical zinc-finger fold.

Belongs to the SAP30 family. In terms of assembly, component of the class 1 Sin3-histone deacetylase complex (HDAC).

The protein resides in the nucleus. In terms of biological role, required for the function of the class 1 Sin3-histone deacetylase complex (HDAC). In Aedes aegypti (Yellowfever mosquito), this protein is Histone deacetylase complex subunit SAP30 homolog.